A 469-amino-acid polypeptide reads, in one-letter code: Glutamate--tRNA ligase 1 (469 aa).

The short motif at 8–18 (PSPTGYLHIGG) is the 'HIGH' region element. Residues 117–137 (TPRYDGTWRPEPGKELPPVPA) form a disordered region. A 'KMSKS' region motif is present at residues 240–244 (KLSKR). Residue K243 participates in ATP binding.

The protein belongs to the class-I aminoacyl-tRNA synthetase family. Glutamate--tRNA ligase type 1 subfamily. Monomer.

The protein localises to the cytoplasm. It carries out the reaction tRNA(Glu) + L-glutamate + ATP = L-glutamyl-tRNA(Glu) + AMP + diphosphate. Its function is as follows. Catalyzes the attachment of glutamate to tRNA(Glu) in a two-step reaction: glutamate is first activated by ATP to form Glu-AMP and then transferred to the acceptor end of tRNA(Glu). In Aliarcobacter butzleri (strain RM4018) (Arcobacter butzleri), this protein is Glutamate--tRNA ligase 1.